The sequence spans 94 residues: DNA-directed RNA polymerase subunit omega (94 aa).

This sequence belongs to the RNA polymerase subunit omega family. As to quaternary structure, the RNAP catalytic core consists of 2 alpha, 1 beta, 1 beta' and 1 omega subunit. When a sigma factor is associated with the core the holoenzyme is formed, which can initiate transcription.

It catalyses the reaction RNA(n) + a ribonucleoside 5'-triphosphate = RNA(n+1) + diphosphate. Promotes RNA polymerase assembly. Latches the N- and C-terminal regions of the beta' subunit thereby facilitating its interaction with the beta and alpha subunits. This is DNA-directed RNA polymerase subunit omega from Frankia casuarinae (strain DSM 45818 / CECT 9043 / HFP020203 / CcI3).